A 3259-amino-acid polypeptide reads, in one-letter code: Striated muscle-specific serine/threonine-protein kinase (3259 aa).

Residues 1-30 (MQKARGTRGEDAGTRAPPSPGVPPKRAKVG) form a disordered region. An Omega-N-methylarginine modification is found at R33. The Ig-like 1 domain occupies 45–126 (PVFLRPLKNA…GKASCEAVLT (82 aa)). Phosphoserine is present on S141. Disordered regions lie at residues 155 to 185 (RAFS…TSEE), 198 to 226 (EQEA…GPRH), 278 to 716 (PSGL…DDSY), and 816 to 880 (VRPG…KVSL). The segment covering 158–185 (STPTGGSDTLVGTSLDTPPTSVTGTSEE) has biased composition (polar residues). Positions 301-317 (PALPPPSKSALLPPPSP) are enriched in pro residues. A phosphoserine mark is found at S368 and S375. T379 bears the Phosphothreonine mark. S382 and S385 each carry phosphoserine. Basic and acidic residues predominate over residues 404–422 (ILDKLQFFEERRRSLERSD). S423 is modified (phosphoserine). A Phosphothreonine modification is found at T453. Phosphoserine occurs at positions 457, 463, 493, 511, 531, and 554. A compositionally biased stretch (basic and acidic residues) spans 459–473 (EELRSPRGSVAERRR). A compositionally biased stretch (basic and acidic residues) spans 510 to 522 (TSREELVRSHESL). Composition is skewed to basic and acidic residues over residues 624–638 (PESR…KREP) and 663–680 (EKNR…RGPE). The 91-residue stretch at 727-817 (PVFEIPLQNM…ASCASSLAVR (91 aa)) folds into the Ig-like 2 domain. Polar residues predominate over residues 820-830 (ASTSPFSSPIT). Ig-like domains follow at residues 874–963 (PTFK…ARLE), 968–1056 (PESR…DELT), and 1069–1157 (PLFT…AQLY). C994 and C1046 form a disulfide bridge. A phosphoserine mark is found at S1133 and S1177. The interval 1162–1185 (RTAASGPSSKLEKMPSIPEEPEHG) is disordered. Residues 1193-1283 (PDFLRPLQDL…AACYAHLYVT (91 aa)) form the Ig-like 6 domain. The region spanning 1290–1387 (PDGAPQVVAV…PSEPVQLLEH (98 aa)) is the Fibronectin type-III 1 domain. Positions 1367–1379 (SSGKSSSKPSAPS) are enriched in low complexity. The interval 1367 to 1386 (SSGKSSSKPSAPSEPVQLLE) is disordered. In terms of domain architecture, Ig-like 7 spans 1490–1578 (PRFESIMEDV…GEVSCKAELS (89 aa)). One can recognise a Protein kinase 1 domain in the interval 1606 to 1859 (YDIHQEIGRG…AEETLEHPWF (254 aa)). ATP is bound by residues 1612-1620 (IGRGAFSYL) and K1635. Residue D1724 is the Proton acceptor of the active site. Disordered stretches follow at residues 1913–2244 (MPRR…QMPA), 2336–2451 (AKFK…SPVL), and 2463–2562 (RLSS…SQPN). Positions 1918-1927 (PPSGGLSSSS) are enriched in low complexity. A phosphoserine mark is found at S1993, S2004, S2019, S2020, and S2042. Basic and acidic residues predominate over residues 2009–2019 (SPRRPELRRGS). Position 2060 is an asymmetric dimethylarginine; alternate (R2060). R2060 is modified (omega-N-methylarginine; alternate). A compositionally biased stretch (low complexity) spans 2069–2081 (AQRLQALRQRLLR). Residues S2114 and S2135 each carry the phosphoserine modification. R2144 is subject to Omega-N-methylarginine. A compositionally biased stretch (polar residues) spans 2168-2179 (ESPSLSALSETQ). Residues 2180–2189 (PPSPALPSAP) show a composition bias toward pro residues. A phosphoserine mark is found at S2182 and S2207. Residues 2193-2207 (ITKSPEPSAATSRDS) show a composition bias toward polar residues. The segment covering 2208–2218 (PQPPAPQPVPE) has biased composition (pro residues). The segment covering 2219–2229 (KIPEPKPEPVR) has biased composition (basic and acidic residues). A compositionally biased stretch (low complexity) spans 2230–2244 (AAKPAQPPLALQMPA). Positions 2336-2345 (AKFKRSRESP) are enriched in basic and acidic residues. The segment covering 2346-2355 (LSRGLRLLSR) has biased composition (low complexity). Residues 2356-2372 (SRSEERGPFRGAEDDGI) are compositionally biased toward basic and acidic residues. S2376 carries the post-translational modification Phosphoserine. T2380 carries the phosphothreonine modification. Basic and acidic residues predominate over residues 2384 to 2395 (LVRRPERSRSVQ). Phosphoserine is present on residues S2410, S2414, S2438, S2439, S2444, and S2448. The segment covering 2463-2484 (RLSSRLQRSGSSEDSGGASGRS) has biased composition (low complexity). Polar residues predominate over residues 2510 to 2520 (QLASQTGATTP). 2 positions are modified to phosphoserine: S2521 and S2524. The span at 2521-2540 (SAESLGSEASGTSGSSAPGE) shows a compositional bias: low complexity. A compositionally biased stretch (basic residues) spans 2543–2554 (SRHRWGLSRLRK). A Phosphoserine modification is found at S2559. Positions 2583–2673 (PPVFHIKLKD…GSITSSCTVA (91 aa)) constitute an Ig-like 8 domain. C2605 and C2657 are oxidised to a cystine. The Fibronectin type-III 2 domain occupies 2680–2774 (KLAPPEVPQT…KVFIRGTQDS (95 aa)). At T2771 the chain carries Phosphothreonine. Disordered stretches follow at residues 2771 to 2829 (TQDS…MSAN) and 2855 to 2957 (TQQA…PQKP). Residue S2774 is modified to Phosphoserine. Residues 2793 to 2810 (RAPPPDSPTSLVPTPPLA) are compositionally biased toward pro residues. Positions 2814 to 2828 (SQASTLSPSTSSMSA) are enriched in low complexity. The Fibronectin type-III 3 domain maps to 2859 to 2965 (EPSPPSILVT…KPYTFLEEKA (107 aa)). Positions 2880–2907 (GTLTPTSSPQGVKPAPSSSSLYMVTSFV) are enriched in polar residues. Residues 2910–2924 (PPDPQPPAPEPPPEP) are compositionally biased toward pro residues. The span at 2940–2950 (SSPTPESTTLR) shows a compositional bias: polar residues. S2941 is modified (phosphoserine). A Protein kinase 2 domain is found at 2958 to 3210 (YTFLEEKARG…LQDCLAHPWL (253 aa)). Residues 2964-2972 (KARGRFGVV) and K2987 each bind ATP. The Proton acceptor role is filled by D3077.

It belongs to the protein kinase superfamily. CAMK Ser/Thr protein kinase family. In terms of assembly, interacts with MTM1. May be autophosphorylated. Isoform 2 is highly expressed in differentiated arterial smooth muscle cells (ASMC) in the medial layer of the aorta. Weakly detected in brain and testis and to a lesser extent in organs rich in striated muscle or visceral smooth muscle.

The protein resides in the nucleus. The catalysed reaction is L-seryl-[protein] + ATP = O-phospho-L-seryl-[protein] + ADP + H(+). It catalyses the reaction L-threonyl-[protein] + ATP = O-phospho-L-threonyl-[protein] + ADP + H(+). Its function is as follows. Isoform 2 may have a role in regulating the growth and differentiation of arterial smooth muscle cells. The sequence is that of Striated muscle-specific serine/threonine-protein kinase (Speg) from Rattus norvegicus (Rat).